The sequence spans 196 residues: ATP-dependent Clp protease proteolytic subunit (196 aa).

Ser96 functions as the Nucleophile in the catalytic mechanism. The active site involves His121.

This sequence belongs to the peptidase S14 family. In terms of assembly, fourteen ClpP subunits assemble into 2 heptameric rings which stack back to back to give a disk-like structure with a central cavity, resembling the structure of eukaryotic proteasomes.

Its subcellular location is the cytoplasm. The catalysed reaction is Hydrolysis of proteins to small peptides in the presence of ATP and magnesium. alpha-casein is the usual test substrate. In the absence of ATP, only oligopeptides shorter than five residues are hydrolyzed (such as succinyl-Leu-Tyr-|-NHMec, and Leu-Tyr-Leu-|-Tyr-Trp, in which cleavage of the -Tyr-|-Leu- and -Tyr-|-Trp bonds also occurs).. Cleaves peptides in various proteins in a process that requires ATP hydrolysis. Has a chymotrypsin-like activity. Plays a major role in the degradation of misfolded proteins. The chain is ATP-dependent Clp protease proteolytic subunit from Streptococcus mutans serotype c (strain ATCC 700610 / UA159).